The primary structure comprises 905 residues: Tight junction protein ZO-3 (905 aa).

Residues 11–93 (TATLYKDPRR…TANVTVKRPR (83 aa)) enclose the PDZ 1 domain. Residues 92–167 (PRRVQLPATK…GGGSEANGLD (76 aa)) are disordered. Serine 111 and serine 128 each carry phosphoserine. The span at 124 to 133 (GDSSSGSGRS) shows a compositional bias: low complexity. Residues 139–155 (RRSRAGRRGRVGSHGRR) are compositionally biased toward basic residues. Residues serine 156, serine 157, serine 161, serine 195, and serine 311 each carry the phosphoserine modification. Positions 187 to 264 (SVLVKRRNSE…ELTLLVLRDS (78 aa)) constitute a PDZ 2 domain. A disordered region spans residues 289–367 (LTSELSQAPP…QSLEDRGYSP (79 aa)). Threonine 317 is subject to Phosphothreonine. Phosphoserine occurs at positions 319, 343, and 359. One can recognise a PDZ 3 domain in the interval 368–434 (DTRVVSFPKG…LTREEAVQFL (67 aa)). The SH3 domain maps to 464 to 541 (GDSFYIRTHF…PNQSRAEQLA (78 aa)). The 182-residue stretch at 573-754 (RRGTKKASTQ…WYQEVKAVIQ (182 aa)) folds into the Guanylate kinase-like domain. Phosphoserine is present on serine 584. Disordered stretches follow at residues 773–818 (EDLD…PQDV) and 850–905 (TDKW…ATDL). Residues 851–877 (DKWETQADSHYTQDQRRQDSMRTYKHE) are compositionally biased toward basic and acidic residues. Phosphoserine occurs at positions 891 and 892.

Belongs to the MAGUK family. Interacts with occludin OCLN, claudins and TPJ1. Interacts with PATJ. Interacts with UBN1. Interacts with FASLG. Interacts with CCND1. In terms of processing, phosphorylated. As to expression, is concentrated in various types of epithelium, in tissues such as the lung, liver and kidney, but not in endothelium or at cadherin-based cell-cell adhesion sites.

It is found in the cell membrane. The protein localises to the cell junction. The protein resides in the tight junction. Its subcellular location is the nucleus. Tjp1, Tjp2, and Tjp3 are closely related scaffolding proteins that link tight junction (TJ) transmembrane proteins such as claudins, junctional adhesion molecules, and occludin to the actin cytoskeleton. The tight junction acts to limit movement of substances through the paracellular space and as a boundary between the compositionally distinct apical and basolateral plasma membrane domains of epithelial and endothelial cells. Binds and recruits PatJ to tight junctions where it connects and stabilizes apical and lateral components of tight junctions. Promotes cell-cycle progression through the sequestration of cyclin D1 (Ccnd1) at tight junctions during mitosis which prevents Ccnd1 degradation during M-phase and enables S-phase transition. With Tjp1 and Tjp2, participates in the junctional retention and stability of the transcription factor DbpA, but is not involved in its shuttling to the nucleus. Contrary to Tjp2, Tjp3 is dispensable for individual viability, embryonic development, epithelial differentiation, and the establishment of TJs, at least in the laboratory environment. The chain is Tight junction protein ZO-3 (Tjp3) from Mus musculus (Mouse).